The chain runs to 356 residues: S-adenosylmethionine:tRNA ribosyltransferase-isomerase (356 aa).

It belongs to the QueA family. As to quaternary structure, monomer.

It is found in the cytoplasm. The catalysed reaction is 7-aminomethyl-7-carbaguanosine(34) in tRNA + S-adenosyl-L-methionine = epoxyqueuosine(34) in tRNA + adenine + L-methionine + 2 H(+). Its pathway is tRNA modification; tRNA-queuosine biosynthesis. Transfers and isomerizes the ribose moiety from AdoMet to the 7-aminomethyl group of 7-deazaguanine (preQ1-tRNA) to give epoxyqueuosine (oQ-tRNA). The protein is S-adenosylmethionine:tRNA ribosyltransferase-isomerase of Escherichia coli O6:K15:H31 (strain 536 / UPEC).